A 928-amino-acid chain; its full sequence is DNA polymerase I (928 aa).

Residues Met1–Ala323 form the 5'-3' exonuclease domain. The 194-residue stretch at Ala324–Gln517 folds into the 3'-5' exonuclease domain. The tract at residues Ala324–His928 is klenow fragment. Positions Gly521 to His928 are polymerase.

Belongs to the DNA polymerase type-A family. Single-chain monomer with multiple functions.

It catalyses the reaction DNA(n) + a 2'-deoxyribonucleoside 5'-triphosphate = DNA(n+1) + diphosphate. Its function is as follows. In addition to polymerase activity, this DNA polymerase exhibits 3'-5' and 5'-3' exonuclease activity. It is able to utilize nicked circular duplex DNA as a template and can unwind the parental DNA strand from its template. The sequence is that of DNA polymerase I (polA) from Salmonella typhimurium (strain LT2 / SGSC1412 / ATCC 700720).